The sequence spans 276 residues: MLLRFTKMHGLGNDFMVLDLVSQHAHILPKHAKQWGDRHTGIGFDQLLLVEAPNNPDVDFRYRIFNSDGSEVEQCGNGARCFARFVLDKRLTAKKQIRVETKSGIIELDIRSDGQISVDMGPPRFVPEEIPFEAAEQATCYTVDVDGQHVDMAAVSMGNPHAVLRVDDINNAPVHELGPKIEHHPRFPARVNVGFLHVVDRQRAQLRVWERGAGETQACGTGACAAAVAAISQGWMDSPLLIDLPGGRLSIEWAGPGHSVMMTGPAVRVYEGQVRL.

Residues Asn13, Gln46, and Asn66 each coordinate substrate. Cys75 acts as the Proton donor in catalysis. Substrate is bound by residues 76 to 77, Asn159, Asn192, and 210 to 211; these read GN and ER. The active-site Proton acceptor is Cys219. Residue 220 to 221 coordinates substrate; sequence GT.

Belongs to the diaminopimelate epimerase family. Homodimer.

The protein localises to the cytoplasm. The enzyme catalyses (2S,6S)-2,6-diaminopimelate = meso-2,6-diaminopimelate. Its pathway is amino-acid biosynthesis; L-lysine biosynthesis via DAP pathway; DL-2,6-diaminopimelate from LL-2,6-diaminopimelate: step 1/1. Its function is as follows. Catalyzes the stereoinversion of LL-2,6-diaminopimelate (L,L-DAP) to meso-diaminopimelate (meso-DAP), a precursor of L-lysine and an essential component of the bacterial peptidoglycan. This Pseudomonas syringae pv. syringae (strain B728a) protein is Diaminopimelate epimerase.